The chain runs to 50 residues: Light-harvesting protein B-870 beta chain (50 aa).

The Cytoplasmic portion of the chain corresponds to Ala2–Ser22. His21 and His39 together coordinate a bacteriochlorophyll. A helical membrane pass occupies residues Val23–Trp45. At Arg46–Gly50 the chain is on the periplasmic side.

It belongs to the antenna complex beta subunit family. As to quaternary structure, the core complex is formed by different alpha and beta chains, binding bacteriochlorophyll molecules, and arranged most probably in tetrameric structures disposed around the reaction center. The non-pigmented gamma chains may constitute additional components.

The protein resides in the cell inner membrane. In terms of biological role, antenna complexes are light-harvesting systems, which transfer the excitation energy to the reaction centers. In Roseobacter denitrificans (strain ATCC 33942 / OCh 114) (Erythrobacter sp. (strain OCh 114)), this protein is Light-harvesting protein B-870 beta chain (pufB).